The primary structure comprises 298 residues: uncharacterized protein (298 aa).

Residues 1–61 enclose the HTH lysR-type domain; it reads MDIFISKKMR…TRKDNNISLN (61 aa). Positions 21-40 form a DNA-binding region, H-T-H motif; that stretch reads IARAAEKIHMTASPFGKSIA.

It belongs to the LysR transcriptional regulatory family.

This is an uncharacterized protein from Escherichia coli (strain K12).